We begin with the raw amino-acid sequence, 491 residues long: Cytochrome P450 2B2 (491 aa).

Position 128 is a phosphoserine; by PKA (Ser128). Position 436 (Cys436) interacts with heme.

It belongs to the cytochrome P450 family. Requires heme as cofactor. Phosphorylation is accompanied by a decrease in enzyme activity.

Its subcellular location is the endoplasmic reticulum membrane. The protein resides in the microsome membrane. It catalyses the reaction an organic molecule + reduced [NADPH--hemoprotein reductase] + O2 = an alcohol + oxidized [NADPH--hemoprotein reductase] + H2O + H(+). Its function is as follows. Cytochromes P450 are a group of heme-thiolate monooxygenases. In liver microsomes, this enzyme is involved in an NADPH-dependent electron transport pathway. It oxidizes a variety of structurally unrelated compounds, including steroids, fatty acids, and xenobiotics. The protein is Cytochrome P450 2B2 (Cyp2b2) of Rattus norvegicus (Rat).